Here is a 153-residue protein sequence, read N- to C-terminus: H/ACA ribonucleoprotein complex subunit 2 (153 aa).

K3 is covalently cross-linked (Glycyl lysine isopeptide (Lys-Gly) (interchain with G-Cter in SUMO2)). K5 participates in a covalent cross-link: Glycyl lysine isopeptide (Lys-Gly) (interchain with G-Cter in SUMO); alternate. Residue K5 forms a Glycyl lysine isopeptide (Lys-Gly) (interchain with G-Cter in SUMO1); alternate linkage. Residue K5 forms a Glycyl lysine isopeptide (Lys-Gly) (interchain with G-Cter in SUMO2); alternate linkage. S19 is modified (phosphoserine).

Belongs to the eukaryotic ribosomal protein eL8 family. In terms of assembly, part of the H/ACA small nucleolar ribonucleoprotein (H/ACA snoRNP) complex, which contains NHP2/NOLA2, GAR1/NOLA1, NOP10/NOLA3, and DKC1/NOLA4, which is presumed to be the catalytic subunit. The complex contains a stable core formed by binding of one or two NOP10-DKC1 heterodimers to NHP2; GAR1 subsequently binds to this core via DKC1. The complex binds a box H/ACA small nucleolar RNA (snoRNA), which may target the specific site of modification within the RNA substrate. During assembly, the complex contains NAF1 instead of GAR1/NOLA1. The complex also interacts with TERC, which contains a 3'-terminal domain related to the box H/ACA snoRNAs. Specific interactions with snoRNAs or TERC are mediated by GAR1 and NHP2. Associates with NOLC1/NOPP140. H/ACA snoRNPs interact with the SMN complex, consisting of SMN1 or SMN2, GEMIN2/SIP1, DDX20/GEMIN3, and GEMIN4. This is mediated by interaction between GAR1 and SMN1 or SMN2. The SMN complex may be required for correct assembly of the H/ACA snoRNP complex. Component of the telomerase holoenzyme complex composed of one molecule of TERT, one molecule of WRAP53/TCAB1, two molecules of H/ACA ribonucleoprotein complex subunits DKC1, NOP10, NHP2 and GAR1, and a telomerase RNA template component (TERC). The telomerase holoenzyme complex is associated with TEP1, SMG6/EST1A and POT1.

It localises to the nucleus. The protein localises to the nucleolus. It is found in the cajal body. Required for ribosome biogenesis and telomere maintenance. Part of the H/ACA small nucleolar ribonucleoprotein (H/ACA snoRNP) complex, which catalyzes pseudouridylation of rRNA. This involves the isomerization of uridine such that the ribose is subsequently attached to C5, instead of the normal N1. Each rRNA can contain up to 100 pseudouridine ('psi') residues, which may serve to stabilize the conformation of rRNAs. May also be required for correct processing or intranuclear trafficking of TERC, the RNA component of the telomerase reverse transcriptase (TERT) holoenzyme. The protein is H/ACA ribonucleoprotein complex subunit 2 (NHP2) of Pongo abelii (Sumatran orangutan).